The following is a 349-amino-acid chain: Hydroxymethylglutaryl-CoA synthase (349 aa).

Positions 29 and 30 each coordinate (3S)-3-hydroxy-3-methylglutaryl-CoA. Residue E81 is the Proton donor/acceptor of the active site. (3S)-3-hydroxy-3-methylglutaryl-CoA contacts are provided by C113 and T154. Catalysis depends on C113, which acts as the Acyl-thioester intermediate. CoA is bound at residue R202. Residues T204 and H237 each contribute to the (3S)-3-hydroxy-3-methylglutaryl-CoA site. H237 acts as the Proton donor/acceptor in catalysis. K242 is a CoA binding site. 3 residues coordinate (3S)-3-hydroxy-3-methylglutaryl-CoA: K246, N269, and S299.

The protein belongs to the thiolase-like superfamily. Archaeal HMG-CoA synthase family. In terms of assembly, interacts with acetoacetyl-CoA thiolase that catalyzes the precedent step in the pathway and with a DUF35 protein. The acetoacetyl-CoA thiolase/HMG-CoA synthase complex channels the intermediate via a fused CoA-binding site, which allows for efficient coupling of the endergonic thiolase reaction with the exergonic HMGCS reaction.

It catalyses the reaction acetoacetyl-CoA + acetyl-CoA + H2O = (3S)-3-hydroxy-3-methylglutaryl-CoA + CoA + H(+). Its pathway is metabolic intermediate biosynthesis; (R)-mevalonate biosynthesis; (R)-mevalonate from acetyl-CoA: step 2/3. Functionally, catalyzes the condensation of acetyl-CoA with acetoacetyl-CoA to form 3-hydroxy-3-methylglutaryl-CoA (HMG-CoA). Functions in the mevalonate (MVA) pathway leading to isopentenyl diphosphate (IPP), a key precursor for the biosynthesis of isoprenoid compounds that are building blocks of archaeal membrane lipids. The polypeptide is Hydroxymethylglutaryl-CoA synthase (Methanosarcina barkeri (strain Fusaro / DSM 804)).